The chain runs to 493 residues: Ketol-acid reductoisomerase (NADP(+)) (493 aa).

The KARI N-terminal Rossmann domain maps to 17 to 208 (LGKCRFMKRE…GGDRAGVLES (192 aa)). NADP(+) contacts are provided by residues 45–48 (CGAQ), R68, R76, S78, and 108–110 (DKQ). The active site involves H132. Position 158 (G158) interacts with NADP(+). 2 consecutive KARI C-terminal knotted domains span residues 209–353 (SFIA…SEQE) and 354–486 (YYDK…MTDM). 4 residues coordinate Mg(2+): D217, E221, E389, and E393. A substrate-binding site is contributed by S414.

The protein belongs to the ketol-acid reductoisomerase family. Mg(2+) serves as cofactor.

The catalysed reaction is (2R)-2,3-dihydroxy-3-methylbutanoate + NADP(+) = (2S)-2-acetolactate + NADPH + H(+). It carries out the reaction (2R,3R)-2,3-dihydroxy-3-methylpentanoate + NADP(+) = (S)-2-ethyl-2-hydroxy-3-oxobutanoate + NADPH + H(+). It functions in the pathway amino-acid biosynthesis; L-isoleucine biosynthesis; L-isoleucine from 2-oxobutanoate: step 2/4. The protein operates within amino-acid biosynthesis; L-valine biosynthesis; L-valine from pyruvate: step 2/4. Functionally, involved in the biosynthesis of branched-chain amino acids (BCAA). Catalyzes an alkyl-migration followed by a ketol-acid reduction of (S)-2-acetolactate (S2AL) to yield (R)-2,3-dihydroxy-isovalerate. In the isomerase reaction, S2AL is rearranged via a Mg-dependent methyl migration to produce 3-hydroxy-3-methyl-2-ketobutyrate (HMKB). In the reductase reaction, this 2-ketoacid undergoes a metal-dependent reduction by NADPH to yield (R)-2,3-dihydroxy-isovalerate. This is Ketol-acid reductoisomerase (NADP(+)) from Colwellia psychrerythraea (strain 34H / ATCC BAA-681) (Vibrio psychroerythus).